A 221-amino-acid polypeptide reads, in one-letter code: Coiled-coil domain-containing protein 70 (221 aa).

A coiled-coil region spans residues 129–168 (NALWEKDRNLLQEDKALWEEEKALWVEERALLEEEKALWE).

The protein is Coiled-coil domain-containing protein 70 (CCDC70) of Macaca fascicularis (Crab-eating macaque).